A 196-amino-acid polypeptide reads, in one-letter code: Glycerol-3-phosphate acyltransferase (196 aa).

A run of 4 helical transmembrane segments spans residues 4–24 (IYIA…GLIL), 70–90 (VLIA…LGAF), 111–131 (IGVL…LWLA), and 152–172 (IFLW…LTLL).

It belongs to the PlsY family. In terms of assembly, probably interacts with PlsX.

It localises to the cell inner membrane. The enzyme catalyses an acyl phosphate + sn-glycerol 3-phosphate = a 1-acyl-sn-glycero-3-phosphate + phosphate. Its pathway is lipid metabolism; phospholipid metabolism. Catalyzes the transfer of an acyl group from acyl-phosphate (acyl-PO(4)) to glycerol-3-phosphate (G3P) to form lysophosphatidic acid (LPA). This enzyme utilizes acyl-phosphate as fatty acyl donor, but not acyl-CoA or acyl-ACP. The polypeptide is Glycerol-3-phosphate acyltransferase (Rhodopseudomonas palustris (strain BisB5)).